The chain runs to 529 residues: Protein FLOURY ENDOSPERM 6, chloroplastic (529 aa).

Disordered stretches follow at residues 1–22 (MLPL…PTLT), 39–77 (AAPH…NAAR), and 166–275 (QGAV…HNKS). Residues 1-71 (MLPLLLPLPV…QTRAPRRTLS (71 aa)) constitute a chloroplast transit peptide. Positions 9 to 18 (PVTPPPPLPS) are enriched in pro residues. A compositionally biased stretch (basic residues) spans 41–57 (PHHHHHHRRRRVYRRQR). The stretch at 400 to 452 (VMQAQEELRSIRAKIAVLEGKMALEIIEKNKIIEEKQRRLDEAEKALSELRTV) forms a coiled coil.

In terms of assembly, interacts with SKIPA. Interacts with ISA1. In terms of tissue distribution, expressed in leaves, stems and panicles. Expressed at lower levels in roots and developing seeds.

Its subcellular location is the plastid. The protein localises to the chloroplast. Involved in compound starch granule formation and starch synthesis in endosperm. May act as a regulatory scaffolding protein and affect starch synthesis and compound starch granule formation through direct interaction with isoamylase 1 (ISA1). Binds starch, amylopectin and amylose through its C-terminal carbohydrate-binding domain (CBM) in vitro. This Oryza sativa subsp. japonica (Rice) protein is Protein FLOURY ENDOSPERM 6, chloroplastic.